A 283-amino-acid chain; its full sequence is MAEITASLVKELRERTAAGMMECKKALVEANGDIELAIENMRKSGAIKAAKKAGNVAADGVIKTKIDGNYAVILEVNCQTDFVAKDGGFQAFADKVLDAAVAGKITDVDVLKAQFEEERVALVAKIGENINIRRVSALEGEVLGNYQHGARIGVLVAAKGADEELVKHLAMHVAASKPEFVKPEDVSAEVVDKEYQVQLEIAMQSGKPKEIAEKMVEGRMKKFTGEVSLTGQPFVMDPAKSVGQLLKEHNADVTNFIRFEVGEGIEKVETDFAAEVAAMSKQS.

Positions T80–V83 are involved in Mg(2+) ion dislocation from EF-Tu.

Belongs to the EF-Ts family.

Its subcellular location is the cytoplasm. Associates with the EF-Tu.GDP complex and induces the exchange of GDP to GTP. It remains bound to the aminoacyl-tRNA.EF-Tu.GTP complex up to the GTP hydrolysis stage on the ribosome. This is Elongation factor Ts from Pectobacterium carotovorum subsp. carotovorum (strain PC1).